The following is a 360-amino-acid chain: MTATLERRESASLWERFCSWITSTENRLYIGWFGVLMIPTLLTATTVFIIAFIAAPPVDIDGIREPVAGSLLYGNNIITGAVIPSSASIGIHFYPIWEAASLDEWLYNGGPYQLIVDHFLLGVCGWIGREWEFSYRLGMRPWISVAFTAPVAAASAVFLVYPIGQGSFSDGMPLGISGTFNFMLVFQAEHNILMHPFHQLGVAGVFGGSLFSAMHGSLVTSSLIRETTENESANYGYKFGQEEETYNIVAAHGYFGRLIFQYASFNNSRALHFFLGLWPVVGIWFTALGIMTMAFNLNGFNFNQSVVDSQGRVINTWADILNRANLGIEVMHERNAHNFPLDLASGESLPVALTAPAVIG.

3 helical membrane passes run 29 to 46 (YIGWFGVLMIPTLLTATT), 118 to 133 (HFLLGVCGWIGREWEF), and 142 to 156 (WISVAFTAPVAAASA). H118 contacts chlorophyll a. W126 serves as a coordination point for pheophytin a. Residues D170 and E189 each coordinate [CaMn4O5] cluster. The chain crosses the membrane as a helical span at residues 197–218 (FHQLGVAGVFGGSLFSAMHGSL). Residue H198 participates in chlorophyll a binding. A quinone-binding positions include H215 and 264 to 265 (SF). H215 serves as a coordination point for Fe cation. H272 contributes to the Fe cation binding site. A helical membrane pass occupies residues 274-288 (FLGLWPVVGIWFTAL). [CaMn4O5] cluster-binding residues include H332, E333, D342, and A344. The propeptide occupies 345-360 (SGESLPVALTAPAVIG).

Belongs to the reaction center PufL/M/PsbA/D family. In terms of assembly, PSII is composed of 1 copy each of membrane proteins PsbA, PsbB, PsbC, PsbD, PsbE, PsbF, PsbH, PsbI, PsbJ, PsbK, PsbL, PsbM, PsbT, PsbX, PsbY, PsbZ, Psb30/Ycf12, at least 3 peripheral proteins of the oxygen-evolving complex and a large number of cofactors. It forms dimeric complexes. Requires The D1/D2 heterodimer binds P680, chlorophylls that are the primary electron donor of PSII, and subsequent electron acceptors. It shares a non-heme iron and each subunit binds pheophytin, quinone, additional chlorophylls, carotenoids and lipids. D1 provides most of the ligands for the Mn4-Ca-O5 cluster of the oxygen-evolving complex (OEC). There is also a Cl(-1) ion associated with D1 and D2, which is required for oxygen evolution. The PSII complex binds additional chlorophylls, carotenoids and specific lipids. as cofactor. In terms of processing, tyr-161 forms a radical intermediate that is referred to as redox-active TyrZ, YZ or Y-Z. C-terminally processed by CTPA; processing is essential to allow assembly of the oxygen-evolving complex and thus photosynthetic growth.

It is found in the plastid. The protein resides in the chloroplast thylakoid membrane. It carries out the reaction 2 a plastoquinone + 4 hnu + 2 H2O = 2 a plastoquinol + O2. Its function is as follows. Photosystem II (PSII) is a light-driven water:plastoquinone oxidoreductase that uses light energy to abstract electrons from H(2)O, generating O(2) and a proton gradient subsequently used for ATP formation. It consists of a core antenna complex that captures photons, and an electron transfer chain that converts photonic excitation into a charge separation. The D1/D2 (PsbA/PsbD) reaction center heterodimer binds P680, the primary electron donor of PSII as well as several subsequent electron acceptors. The sequence is that of Photosystem II protein D1 from Guillardia theta (Cryptophyte).